The primary structure comprises 127 residues: MFRTMMNGKIHRATVTEANLNYVGSITIDSAILEAVDMLPNEKVQIVNNNNGARIETYIIPGEPGSGVICLNGAAARHVQVGDVVIIMSYGMFTAEEAKTHEPKIVVLDEKNHIEMILPEEKAHTTL.

Serine 25 acts as the Schiff-base intermediate with substrate; via pyruvic acid in catalysis. The residue at position 25 (serine 25) is a Pyruvic acid (Ser). A substrate-binding site is contributed by threonine 57. Residue tyrosine 58 is the Proton donor of the active site. Residue 73-75 coordinates substrate; it reads GAA.

Belongs to the PanD family. As to quaternary structure, heterooctamer of four alpha and four beta subunits. Requires pyruvate as cofactor. Is synthesized initially as an inactive proenzyme, which is activated by self-cleavage at a specific serine bond to produce a beta-subunit with a hydroxyl group at its C-terminus and an alpha-subunit with a pyruvoyl group at its N-terminus.

It is found in the cytoplasm. It catalyses the reaction L-aspartate + H(+) = beta-alanine + CO2. It functions in the pathway cofactor biosynthesis; (R)-pantothenate biosynthesis; beta-alanine from L-aspartate: step 1/1. In terms of biological role, catalyzes the pyruvoyl-dependent decarboxylation of aspartate to produce beta-alanine. This is Aspartate 1-decarboxylase from Listeria monocytogenes serotype 4b (strain F2365).